The following is a 167-amino-acid chain: SsrA-binding protein (167 aa).

The protein belongs to the SmpB family.

It is found in the cytoplasm. In terms of biological role, required for rescue of stalled ribosomes mediated by trans-translation. Binds to transfer-messenger RNA (tmRNA), required for stable association of tmRNA with ribosomes. tmRNA and SmpB together mimic tRNA shape, replacing the anticodon stem-loop with SmpB. tmRNA is encoded by the ssrA gene; the 2 termini fold to resemble tRNA(Ala) and it encodes a 'tag peptide', a short internal open reading frame. During trans-translation Ala-aminoacylated tmRNA acts like a tRNA, entering the A-site of stalled ribosomes, displacing the stalled mRNA. The ribosome then switches to translate the ORF on the tmRNA; the nascent peptide is terminated with the 'tag peptide' encoded by the tmRNA and targeted for degradation. The ribosome is freed to recommence translation, which seems to be the essential function of trans-translation. The chain is SsrA-binding protein from Stenotrophomonas maltophilia (strain K279a).